Consider the following 128-residue polypeptide: Large ribosomal subunit protein bL17 (128 aa).

Belongs to the bacterial ribosomal protein bL17 family. Part of the 50S ribosomal subunit. Contacts protein L32.

This chain is Large ribosomal subunit protein bL17, found in Streptococcus thermophilus (strain ATCC BAA-250 / LMG 18311).